We begin with the raw amino-acid sequence, 231 residues long: Equistatin (231 aa).

The N-terminal stretch at 1 to 32 is a signal peptide; that stretch reads MALSQNQAKFSKGFVVMIWVLFIACAITSTEA. Thyroglobulin type-1 domains lie at 34 to 95, 102 to 163, and 167 to 231; these read LTKC…SPDC, LTLC…RPTC, and LSEC…RPTC. Disulfide bonds link Cys37–Cys56, Cys67–Cys74, Cys76–Cys95, Cys105–Cys124, Cys135–Cys142, Cys144–Cys163, Cys170–Cys191, Cys202–Cys209, and Cys211–Cys231.

This sequence belongs to the protease inhibitor I31 family.

It localises to the secreted. Potent inhibitor of papain-like cysteine proteinases (Ki=0.18-0.57 nM on papain), as well as of the aspartic proteinase cathepsin D (Ki=0.3-05 nM). The chain is Equistatin from Actinia equina (Beadlet anemone).